The primary structure comprises 543 residues: Excitatory amino acid transporter 1 (543 aa).

Topologically, residues 1–47 (MTKSNGEEPRMGGRMERLQQGVRKRTLLAKKKVQSLTKEDVKSYLFR) are cytoplasmic. The chain crosses the membrane as a helical span at residues 48–68 (NAFVLLTVTAVIVGTILGFAL). Over 69-86 (RPYKMSYREVKYFSFPGE) the chain is Extracellular. Residues 87 to 108 (LLMRMLQMLVLPLIISSLVTGM) traverse the membrane as a helical segment. Over 109-122 (AALDSKASGKMGMR) the chain is Cytoplasmic. Residues 123–145 (AVVYYMTTTIIAVVIGIIIVIII) traverse the membrane as a helical segment. The Extracellular segment spans residues 146 to 236 (HPGKGTKENM…IREEMVPVPG (91 aa)). N206 and N216 each carry an N-linked (GlcNAc...) asparagine glycan. A helical membrane pass occupies residues 237–260 (SVNGVNALGLVVFSMCFGFVIGNM). Topologically, residues 261-269 (KEQGQALRE) are cytoplasmic. The helical transmembrane segment at 270–297 (FFDSLNEAIMRLVAVIMWYAPLGILFLI) threads the bilayer. The Extracellular portion of the chain corresponds to 298–318 (AGKIVEMEDMGVIGGQLAMYT). A helical membrane pass occupies residues 319-340 (VTVIVGLLIHAVIVLPLLYFLV). Residues 341-345 (TRKNP) are Cytoplasmic-facing. Residues 346 to 376 (WVFIGGLLQALITALGTSSSSATLPITFKCL) constitute an intramembrane region (discontinuously helical). Residue 363 to 365 (SSS) participates in L-aspartate binding. At 377 to 385 (EENNGVDKR) the chain is on the cytoplasmic side. A helical transmembrane segment spans residues 386–412 (ITRFVLPVGATINMDGTALYEALAAIF). Na(+) is bound by residues G394, T396, and N398. T402 contacts L-aspartate. The Extracellular segment spans residues 413-425 (IAQVNNFDLNFGQ). Residues 426–459 (IITISITATAASIGAAGIPQAGLVTMVIVLTSVG) constitute an intramembrane region (discontinuously helical). Residue 443–447 (IPQAG) participates in L-aspartate binding. The Extracellular segment spans residues 460-472 (LPTDDITLIIAVD). A helical transmembrane segment spans residues 473 to 494 (WFLDRLRTTTNVLGDSLGAGIV). The L-aspartate site is built by D476 and N483. Na(+) is bound by residues N483 and D487. Residues 495–543 (EHLSRHELKNRDVEMGNSVIEENEMKKPYQLIAQDNEPEKPVADSETKM) are Cytoplasmic-facing. S512 carries the phosphoserine modification. Residues 522-543 (PYQLIAQDNEPEKPVADSETKM) are disordered. Basic and acidic residues predominate over residues 531-543 (EPEKPVADSETKM).

This sequence belongs to the dicarboxylate/amino acid:cation symporter (DAACS) (TC 2.A.23) family. SLC1A3 subfamily. Homotrimer. Post-translationally, glycosylated. As to expression, detected in brain, in Bergmann glia arborising into the molecular layer of the cerebellum (at protein level). Localized in brain and is highly enriched in the Purkinje cell layer in cerebellum. Intermediate level in lung, low level in spleen, skeletal muscle and testis.

It localises to the cell membrane. It carries out the reaction K(+)(in) + L-glutamate(out) + 3 Na(+)(out) + H(+)(out) = K(+)(out) + L-glutamate(in) + 3 Na(+)(in) + H(+)(in). It catalyses the reaction K(+)(in) + L-aspartate(out) + 3 Na(+)(out) + H(+)(out) = K(+)(out) + L-aspartate(in) + 3 Na(+)(in) + H(+)(in). The enzyme catalyses D-aspartate(out) + K(+)(in) + 3 Na(+)(out) + H(+)(out) = D-aspartate(in) + K(+)(out) + 3 Na(+)(in) + H(+)(in). Its function is as follows. Sodium-dependent, high-affinity amino acid transporter that mediates the uptake of L-glutamate and also L-aspartate and D-aspartate. Functions as a symporter that transports one amino acid molecule together with two or three Na(+) ions and one proton, in parallel with the counter-transport of one K(+) ion. Plays a redundant role in the rapid removal of released glutamate from the synaptic cleft, which is essential for terminating the postsynaptic action of glutamate. This is Excitatory amino acid transporter 1 (Slc1a3) from Mus musculus (Mouse).